The sequence spans 425 residues: UPF0229 protein YE2273 (425 aa).

The tract at residues 84–110 (TNDRIERPQGGGGGSGSGQGNAGQDGE) is disordered. Residues 92 to 108 (QGGGGGSGSGQGNAGQD) show a composition bias toward gly residues.

Belongs to the UPF0229 family.

The sequence is that of UPF0229 protein YE2273 from Yersinia enterocolitica serotype O:8 / biotype 1B (strain NCTC 13174 / 8081).